We begin with the raw amino-acid sequence, 237 residues long: rRNA-processing protein EFG1 (237 aa).

Residues 1–24 (MPKTVKNPKNNKSRSRGAPIQVAE) form a disordered region. Coiled-coil stretches lie at residues 53-113 (DKKI…ISQT) and 166-186 (LKIT…LMEE). Residues 206-237 (NDKTQKAVLTEEIDAPEQKQDEQQEEQDDFFE) form a disordered region. Residues 228 to 237 (QQEEQDDFFE) show a composition bias toward acidic residues.

This sequence belongs to the EFG1 family.

It is found in the nucleus. The protein resides in the nucleolus. Its function is as follows. Involved in rRNA processing. In Candida albicans (strain SC5314 / ATCC MYA-2876) (Yeast), this protein is rRNA-processing protein EFG1.